Consider the following 240-residue polypeptide: Pyridoxine 5'-phosphate synthase (240 aa).

N7 lines the 3-amino-2-oxopropyl phosphate pocket. 9–10 (DH) contributes to the 1-deoxy-D-xylulose 5-phosphate binding site. Residue R18 coordinates 3-amino-2-oxopropyl phosphate. The active-site Proton acceptor is H43. Residues R45 and H50 each contribute to the 1-deoxy-D-xylulose 5-phosphate site. The Proton acceptor role is filled by E70. Residue T100 participates in 1-deoxy-D-xylulose 5-phosphate binding. H191 acts as the Proton donor in catalysis. 3-amino-2-oxopropyl phosphate-binding positions include G192 and 213–214 (GH).

This sequence belongs to the PNP synthase family. As to quaternary structure, homooctamer; tetramer of dimers.

It localises to the cytoplasm. The catalysed reaction is 3-amino-2-oxopropyl phosphate + 1-deoxy-D-xylulose 5-phosphate = pyridoxine 5'-phosphate + phosphate + 2 H2O + H(+). The protein operates within cofactor biosynthesis; pyridoxine 5'-phosphate biosynthesis; pyridoxine 5'-phosphate from D-erythrose 4-phosphate: step 5/5. Its function is as follows. Catalyzes the complicated ring closure reaction between the two acyclic compounds 1-deoxy-D-xylulose-5-phosphate (DXP) and 3-amino-2-oxopropyl phosphate (1-amino-acetone-3-phosphate or AAP) to form pyridoxine 5'-phosphate (PNP) and inorganic phosphate. The sequence is that of Pyridoxine 5'-phosphate synthase from Crocosphaera subtropica (strain ATCC 51142 / BH68) (Cyanothece sp. (strain ATCC 51142)).